The primary structure comprises 396 residues: MSKEKFERAKPHVNVGTIGHVDHGKTTLTAALTKVSAARFGSAAQDYDQIDGAPEERARGITISTSHVEYESPLRHYAHVDCPGHADYVKNMITGAAQMDGAILVCSAADGPMPQTREHILLSRQVGVPYIIVFLNKADMVDDAELLELVEMEVRELLNEYDFPGDDTPIVVGSALKALEGDTSEIGIPAIEKLVDALDASIPEPKRDIDKPFLMPIEDVFSISGRGTVVTGRVERGVVKVGDELEIVGLRDTAKTTCTGVEMFRKLLDQGQAGDNVGVLLRGTKREEVERGQVLAKPGTITPHTKFESEVYVLSKEEGGRHTPFFKGYRPQFYFRTTDVTGECVLPEGVEMVMPGDNVKMIVQLIHPIAMDEGLRFAIREGGRTVGAGVVAKIIE.

The region spanning 10-206 is the tr-type G domain; sequence KPHVNVGTIG…ALDASIPEPK (197 aa). Residues 19–26 are G1; the sequence is GHVDHGKT. 19-26 is a binding site for GTP; that stretch reads GHVDHGKT. Position 26 (Thr-26) interacts with Mg(2+). A G2 region spans residues 60–64; the sequence is GITIS. Residues 81-84 are G3; it reads DCPG. GTP-binding positions include 81–85 and 136–139; these read DCPGH and NKAD. The tract at residues 136–139 is G4; sequence NKAD. Positions 174–176 are G5; that stretch reads SAL.

This sequence belongs to the TRAFAC class translation factor GTPase superfamily. Classic translation factor GTPase family. EF-Tu/EF-1A subfamily. Monomer.

The protein resides in the cytoplasm. The enzyme catalyses GTP + H2O = GDP + phosphate + H(+). Functionally, GTP hydrolase that promotes the GTP-dependent binding of aminoacyl-tRNA to the A-site of ribosomes during protein biosynthesis. This chain is Elongation factor Tu, found in Dichelobacter nodosus (strain VCS1703A).